A 313-amino-acid polypeptide reads, in one-letter code: Biotin synthase (313 aa).

The 231-residue stretch at Asn-28 to Ser-258 folds into the Radical SAM core domain. Positions 46, 50, and 53 each coordinate [4Fe-4S] cluster. Residues Cys-90, Cys-121, Cys-181, and Arg-256 each coordinate [2Fe-2S] cluster.

It belongs to the radical SAM superfamily. Biotin synthase family. As to quaternary structure, homodimer. [4Fe-4S] cluster serves as cofactor. Requires [2Fe-2S] cluster as cofactor.

The enzyme catalyses (4R,5S)-dethiobiotin + (sulfur carrier)-SH + 2 reduced [2Fe-2S]-[ferredoxin] + 2 S-adenosyl-L-methionine = (sulfur carrier)-H + biotin + 2 5'-deoxyadenosine + 2 L-methionine + 2 oxidized [2Fe-2S]-[ferredoxin]. Its pathway is cofactor biosynthesis; biotin biosynthesis; biotin from 7,8-diaminononanoate: step 2/2. Catalyzes the conversion of dethiobiotin (DTB) to biotin by the insertion of a sulfur atom into dethiobiotin via a radical-based mechanism. This is Biotin synthase from Francisella tularensis subsp. holarctica (strain FTNF002-00 / FTA).